Reading from the N-terminus, the 61-residue chain is Large ribosomal subunit protein uL30 (61 aa).

It belongs to the universal ribosomal protein uL30 family. In terms of assembly, part of the 50S ribosomal subunit.

The sequence is that of Large ribosomal subunit protein uL30 from Chromohalobacter salexigens (strain ATCC BAA-138 / DSM 3043 / CIP 106854 / NCIMB 13768 / 1H11).